Reading from the N-terminus, the 200-residue chain is 3-isopropylmalate dehydratase small subunit (200 aa).

This sequence belongs to the LeuD family. LeuD type 1 subfamily. In terms of assembly, heterodimer of LeuC and LeuD.

The enzyme catalyses (2R,3S)-3-isopropylmalate = (2S)-2-isopropylmalate. It functions in the pathway amino-acid biosynthesis; L-leucine biosynthesis; L-leucine from 3-methyl-2-oxobutanoate: step 2/4. Functionally, catalyzes the isomerization between 2-isopropylmalate and 3-isopropylmalate, via the formation of 2-isopropylmaleate. In Vibrio vulnificus (strain CMCP6), this protein is 3-isopropylmalate dehydratase small subunit.